Reading from the N-terminus, the 190-residue chain is Xanthine phosphoribosyltransferase (190 aa).

Xanthine-binding residues include L20 and N27. Position 127-131 (A127–A131) interacts with 5-phospho-alpha-D-ribose 1-diphosphate. K155 is a xanthine binding site.

The protein belongs to the purine/pyrimidine phosphoribosyltransferase family. Xpt subfamily. In terms of assembly, homodimer.

It localises to the cytoplasm. The enzyme catalyses XMP + diphosphate = xanthine + 5-phospho-alpha-D-ribose 1-diphosphate. Its pathway is purine metabolism; XMP biosynthesis via salvage pathway; XMP from xanthine: step 1/1. Functionally, converts the preformed base xanthine, a product of nucleic acid breakdown, to xanthosine 5'-monophosphate (XMP), so it can be reused for RNA or DNA synthesis. The chain is Xanthine phosphoribosyltransferase from Bacteroides thetaiotaomicron (strain ATCC 29148 / DSM 2079 / JCM 5827 / CCUG 10774 / NCTC 10582 / VPI-5482 / E50).